The sequence spans 334 residues: Glyceraldehyde-3-phosphate dehydrogenase (334 aa).

NAD(+)-binding positions include 11 to 12, Asp-33, and Ser-119; that span reads RI. D-glyceraldehyde 3-phosphate contacts are provided by residues 149–151 and Thr-180; that span reads SCT. Cys-150 acts as the Nucleophile in catalysis. Asn-181 lines the NAD(+) pocket. D-glyceraldehyde 3-phosphate is bound by residues Arg-197, 210 to 211, and Arg-233; that span reads TG. Asn-314 is a binding site for NAD(+).

It belongs to the glyceraldehyde-3-phosphate dehydrogenase family. In terms of assembly, homotetramer.

The protein localises to the cytoplasm. The enzyme catalyses D-glyceraldehyde 3-phosphate + phosphate + NAD(+) = (2R)-3-phospho-glyceroyl phosphate + NADH + H(+). It participates in carbohydrate degradation; glycolysis; pyruvate from D-glyceraldehyde 3-phosphate: step 1/5. Catalyzes the oxidative phosphorylation of glyceraldehyde 3-phosphate (G3P) to 1,3-bisphosphoglycerate (BPG) using the cofactor NAD. The first reaction step involves the formation of a hemiacetal intermediate between G3P and a cysteine residue, and this hemiacetal intermediate is then oxidized to a thioester, with concomitant reduction of NAD to NADH. The reduced NADH is then exchanged with the second NAD, and the thioester is attacked by a nucleophilic inorganic phosphate to produce BPG. The chain is Glyceraldehyde-3-phosphate dehydrogenase (gap) from Clostridium acetobutylicum (strain ATCC 824 / DSM 792 / JCM 1419 / IAM 19013 / LMG 5710 / NBRC 13948 / NRRL B-527 / VKM B-1787 / 2291 / W).